The following is a 360-amino-acid chain: CCA-adding enzyme (360 aa).

Residues Gly-8 and Arg-11 each coordinate ATP. 2 residues coordinate CTP: Gly-8 and Arg-11. 2 residues coordinate Mg(2+): Asp-21 and Asp-23. Positions 91, 137, and 140 each coordinate ATP. Residues Arg-91, Arg-137, and Arg-140 each coordinate CTP.

The protein belongs to the tRNA nucleotidyltransferase/poly(A) polymerase family. Bacterial CCA-adding enzyme type 2 subfamily. The cofactor is Mg(2+).

The catalysed reaction is a tRNA precursor + 2 CTP + ATP = a tRNA with a 3' CCA end + 3 diphosphate. It catalyses the reaction a tRNA with a 3' CCA end + 2 CTP + ATP = a tRNA with a 3' CCACCA end + 3 diphosphate. Functionally, catalyzes the addition and repair of the essential 3'-terminal CCA sequence in tRNAs without using a nucleic acid template. Adds these three nucleotides in the order of C, C, and A to the tRNA nucleotide-73, using CTP and ATP as substrates and producing inorganic pyrophosphate. tRNA 3'-terminal CCA addition is required both for tRNA processing and repair. Also involved in tRNA surveillance by mediating tandem CCA addition to generate a CCACCA at the 3' terminus of unstable tRNAs. While stable tRNAs receive only 3'-terminal CCA, unstable tRNAs are marked with CCACCA and rapidly degraded. This is CCA-adding enzyme from Francisella tularensis subsp. tularensis (strain FSC 198).